Consider the following 506-residue polypeptide: MSSGLSLERACAVALGIVASASLVAAGPCDIYSSGGTPCVAAHSTTRALYSAYTGALYQVKRGSDGSTTDIAPLSAGGVADAAIQDSFCANTTCLITIIYDQSGRGNHLTQAPPGGFNGPESNGYDNLASAVGAPVTLNGKKAYGVFMSPGTGYRNNAASGTATGDKAEGMYAVLDGTHYNSACCFDYGNAEVSNTDTGNGHMEAIYYGDNTVWGSGAGSGPWIMADLENGLFSGLSSTNNAGDPSISYRFVTAVVKGEANQWSIRGANAASGSLSTYYSGARPSASGYNPMSKEGAIILGIGGDNSNGAQGTFYEGVMTSGYPSDATENSVQADIVAAKYAIASLTSGPALTVGSSISLQVTTAGYTTRYLAHDGSTVNTQVVSSSSTTALRQQASWTVRTGLANSACLSFESVDTPGSYIRHYNFALLLNANDGTKQFYEDATFCPQAGLNGQGNSIRSWSYPTRYFRHYENVLYVASNGGVQTFDATTSFNDDVSWVVSTGFA.

A signal peptide spans 1–26 (MSSGLSLERACAVALGIVASASLVAA). Residues 27–343 (GPCDIYSSGG…ADIVAAKYAI (317 aa)) are catalytic. Disulfide bonds link Cys29–Cys39, Cys89–Cys94, and Cys184–Cys185. The N-linked (GlcNAc...) asparagine glycan is linked to Asn91. Position 227 (Asp227) interacts with substrate. The active-site Nucleophile is Glu229. Asn230 and Gly304 together coordinate substrate. Asp305 (proton donor) is an active-site residue. An ABD region spans residues 344-506 (ASLTSGPALT…VSWVVSTGFA (163 aa)). A disulfide bridge links Cys409 with Cys447. Substrate is bound by residues His424, Asn426, Phe427, Asp443, His471, Glu473, Leu476, and Asp496.

Belongs to the glycosyl hydrolase 54 family.

It localises to the secreted. It catalyses the reaction Hydrolysis of terminal non-reducing alpha-L-arabinofuranoside residues in alpha-L-arabinosides.. Its pathway is glycan metabolism; L-arabinan degradation. Its function is as follows. Alpha-L-arabinofuranosidase involved in the degradation of arabinoxylan, a major component of plant hemicellulose. Able to hydrolyze 1,5-, 1,3- and 1,2-alpha-linkages not only in L-arabinofuranosyl oligosaccharides, but also in polysaccharides containing terminal non-reducing L-arabinofuranoses in side chains, like L-arabinan, arabinogalactan and arabinoxylan. The polypeptide is Alpha-L-arabinofuranosidase B (abfB) (Aspergillus oryzae (strain ATCC 42149 / RIB 40) (Yellow koji mold)).